A 397-amino-acid polypeptide reads, in one-letter code: Multidrug resistance protein MdtH (397 aa).

11 consecutive transmembrane segments (helical) span residues W11–I31, S32–L52, F71–L91, A94–F114, L137–L157, Y163–L183, L211–I231, A242–A262, F291–I311, L340–L360, and L366–F386.

This sequence belongs to the major facilitator superfamily. DHA1 family. MdtH (TC 2.A.1.2.21) subfamily.

The protein localises to the cell inner membrane. The polypeptide is Multidrug resistance protein MdtH (Aeromonas hydrophila subsp. hydrophila (strain ATCC 7966 / DSM 30187 / BCRC 13018 / CCUG 14551 / JCM 1027 / KCTC 2358 / NCIMB 9240 / NCTC 8049)).